Consider the following 69-residue polypeptide: Putative membrane protein insertion efficiency factor (69 aa).

The protein belongs to the UPF0161 family.

The protein localises to the cell inner membrane. In terms of biological role, could be involved in insertion of integral membrane proteins into the membrane. This is Putative membrane protein insertion efficiency factor from Novosphingobium aromaticivorans (strain ATCC 700278 / DSM 12444 / CCUG 56034 / CIP 105152 / NBRC 16084 / F199).